Consider the following 599-residue polypeptide: Putative clathrin assembly protein At1g03050 (599 aa).

Residues 26–162 form the ENTH domain; it reads GRSASLSELD…DFRMQARHGK (137 aa). Disordered stretches follow at residues 332 to 382 and 580 to 599; these read KQSK…PEEE and QGHMNLRQNQNQPYSYTPQY. Composition is skewed to acidic residues over residues 341–359 and 373–382; these read ADEDDDEARTEEVNEEQED and EEDDVKPEEE. The segment covering 585 to 599 has biased composition (polar residues); sequence LRQNQNQPYSYTPQY.

It is found in the membrane. It localises to the clathrin-coated pit. Its subcellular location is the golgi apparatus. The protein resides in the cytoplasmic vesicle. The protein localises to the clathrin-coated vesicle. This Arabidopsis thaliana (Mouse-ear cress) protein is Putative clathrin assembly protein At1g03050.